The following is a 388-amino-acid chain: Quinolone resistance protein NorA (388 aa).

Transmembrane regions (helical) follow at residues 5-25, 42-62, 69-89, 99-119, 129-149, 157-177, 201-221, 239-259, 269-289, 293-313, 331-351, and 355-375; these read IFVL…VIPV, LLVA…GTLA, LIIC…AVGH, VIGG…IADI, FGYM…IGGF, MPFY…IVLI, WKVF…LSAF, DISI…IYFF, LTFI…LVFA, WSIM…RPAI, LNST…GALF, and IEAP…IVLI.

Belongs to the major facilitator superfamily. TCR/Tet family.

It localises to the cell membrane. In terms of biological role, involved in quinolone resistance. May constitute a membrane-associated active efflux pump of hydrophilic quinolones. This chain is Quinolone resistance protein NorA (norA), found in Staphylococcus aureus (strain COL).